The following is a 278-amino-acid chain: Protoheme IX farnesyltransferase (278 aa).

The next 9 membrane-spanning stretches (helical) occupy residues 12–32 (VIWL…GTVD), 36–56 (LAAL…FNHY), 72–92 (PLPA…ALSA), 105–124 (LPGV…YTVW), 130–150 (WLNI…GYAL), 157–177 (LPAV…IWAL), 204–224 (AIIS…YLVF), 228–248 (LPGL…SALA), and 257–277 (MWRM…ALVF).

This sequence belongs to the UbiA prenyltransferase family. Protoheme IX farnesyltransferase subfamily.

The protein localises to the cell membrane. The enzyme catalyses heme b + (2E,6E)-farnesyl diphosphate + H2O = Fe(II)-heme o + diphosphate. Its pathway is porphyrin-containing compound metabolism; heme O biosynthesis; heme O from protoheme: step 1/1. Functionally, converts heme B (protoheme IX) to heme O by substitution of the vinyl group on carbon 2 of heme B porphyrin ring with a hydroxyethyl farnesyl side group. The chain is Protoheme IX farnesyltransferase from Pyrobaculum neutrophilum (strain DSM 2338 / JCM 9278 / NBRC 100436 / V24Sta) (Thermoproteus neutrophilus).